We begin with the raw amino-acid sequence, 1337 residues long: Phosphoribosylformylglycinamidine synthase (1337 aa).

S215 is subject to Phosphoserine. ATP contacts are provided by residues 322–333 (GATTGTGGRIRD) and 402–404 (AGF). T619 and T622 each carry phosphothreonine. An ATP-binding site is contributed by A705. 4 residues coordinate Mg(2+): D706, E745, N749, and D908. S910 contributes to the ATP binding site. The Glutamine amidotransferase type-1 domain maps to 1063–1301 (RVAILREEGS…ALMPHPERAV (239 aa)). C1157 acts as the Nucleophile in catalysis. Active-site residues include H1296 and E1298.

The protein in the N-terminal section; belongs to the FGAMS family.

The protein resides in the cytoplasm. It catalyses the reaction N(2)-formyl-N(1)-(5-phospho-beta-D-ribosyl)glycinamide + L-glutamine + ATP + H2O = 2-formamido-N(1)-(5-O-phospho-beta-D-ribosyl)acetamidine + L-glutamate + ADP + phosphate + H(+). The protein operates within purine metabolism; IMP biosynthesis via de novo pathway; 5-amino-1-(5-phospho-D-ribosyl)imidazole from N(2)-formyl-N(1)-(5-phospho-D-ribosyl)glycinamide: step 1/2. Functionally, phosphoribosylformylglycinamidine synthase involved in the purines biosynthetic pathway. Catalyzes the ATP-dependent conversion of formylglycinamide ribonucleotide (FGAR) and glutamine to yield formylglycinamidine ribonucleotide (FGAM) and glutamate. The chain is Phosphoribosylformylglycinamidine synthase (Pfas) from Mus musculus (Mouse).